Reading from the N-terminus, the 500-residue chain is Probable cytosol aminopeptidase (500 aa).

2 residues coordinate Mn(2+): Lys-265 and Asp-270. Residue Lys-277 is part of the active site. Residues Asp-288, Asp-347, and Glu-349 each contribute to the Mn(2+) site. Residue Arg-351 is part of the active site.

This sequence belongs to the peptidase M17 family. Requires Mn(2+) as cofactor.

The protein resides in the cytoplasm. The enzyme catalyses Release of an N-terminal amino acid, Xaa-|-Yaa-, in which Xaa is preferably Leu, but may be other amino acids including Pro although not Arg or Lys, and Yaa may be Pro. Amino acid amides and methyl esters are also readily hydrolyzed, but rates on arylamides are exceedingly low.. It catalyses the reaction Release of an N-terminal amino acid, preferentially leucine, but not glutamic or aspartic acids.. Functionally, presumably involved in the processing and regular turnover of intracellular proteins. Catalyzes the removal of unsubstituted N-terminal amino acids from various peptides. This chain is Probable cytosol aminopeptidase, found in Corynebacterium glutamicum (strain ATCC 13032 / DSM 20300 / JCM 1318 / BCRC 11384 / CCUG 27702 / LMG 3730 / NBRC 12168 / NCIMB 10025 / NRRL B-2784 / 534).